Reading from the N-terminus, the 329-residue chain is uncharacterized protein (329 aa).

Residues 37-180 form the SIS domain; it reads LAEKILGHSG…AMLLFHSRGV (144 aa). Residue 52–57 participates in ATP binding; that stretch reads GVGKSG. CBS domains are found at residues 206–265 and 274–329; these read MFPK…GGEV and MTAN…AGLL.

The protein belongs to the SIS family. GutQ/KpsF subfamily.

This is an uncharacterized protein from Chlamydia pneumoniae (Chlamydophila pneumoniae).